Consider the following 141-residue polypeptide: Large ribosomal subunit protein uL11 (141 aa).

This sequence belongs to the universal ribosomal protein uL11 family. As to quaternary structure, part of the ribosomal stalk of the 50S ribosomal subunit. Interacts with L10 and the large rRNA to form the base of the stalk. L10 forms an elongated spine to which L12 dimers bind in a sequential fashion forming a multimeric L10(L12)X complex. One or more lysine residues are methylated.

Its function is as follows. Forms part of the ribosomal stalk which helps the ribosome interact with GTP-bound translation factors. The protein is Large ribosomal subunit protein uL11 of Chlorobium phaeovibrioides (strain DSM 265 / 1930) (Prosthecochloris vibrioformis (strain DSM 265)).